We begin with the raw amino-acid sequence, 394 residues long: RNA demethylase ALKBH5 (394 aa).

Disordered regions lie at residues 1–26 and 48–83; these read MAAASGYTDLREKLKSMTSRDNYKAG and AEPYAAPGVKRKYPEDSDPERSDFEEQQLQKEEEAR. Ala-2 bears the N-acetylalanine mark. Residue Lys-57 forms a Glycyl lysine isopeptide (Lys-Gly) (interchain with G-Cter in ubiquitin) linkage. Residues 59–83 show a composition bias toward basic and acidic residues; it reads KYPEDSDPERSDFEEQQLQKEEEAR. Phosphoserine is present on residues Ser-64 and Ser-69. Positions 67-116 form a coiled coil; sequence ERSDFEEQQLQKEEEARKVKSGIRQMRLFSQDECAKIEARIDEVVSRAEK. Lys-86 is covalently cross-linked (Glycyl lysine isopeptide (Lys-Gly) (interchain with G-Cter in SUMO1)). Position 87 is a phosphoserine (Ser-87). Lys-132 is modified (N6-acetyllysine). Residue Tyr-139 is part of the active site. 2-oxoglutarate-binding residues include Asn-193, Tyr-195, and His-204. Cys-230 and Cys-267 form a disulfide bridge. An N6-acetyllysine modification is found at Lys-235. 2-oxoglutarate-binding residues include His-266 and Arg-277. The disordered stretch occupies residues 298-394; that stretch reads SSSVLPPSYA…PARKVKMRRH (97 aa). Residue Lys-321 forms a Glycyl lysine isopeptide (Lys-Gly) (interchain with G-Cter in SUMO1) linkage. Ser-325 bears the Phosphoserine mark. A Glycyl lysine isopeptide (Lys-Gly) (interchain with G-Cter in SUMO2) cross-link involves residue Lys-328. Positions 328-349 are enriched in basic and acidic residues; sequence KADPDAAHRPRILEMDKEENRR. Residues Ser-371 and Ser-384 each carry the phosphoserine modification.

It belongs to the alkB family. As to quaternary structure, monomer. Interacts with RBM33; promoting desumoylation by SENP1 and recruitment to N(6)-methyladenosine-containing mRNAs. Interacts (when acetylated by KAT8) with PSPC1; interaction facilitates recognition of N(6)-methyladenosine (m6A) mRNA. Fe(2+) is required as a cofactor. Phosphorylated at Ser-87 and Ser-325 in response to reactive oxygen species (ROS), promoting sumoylation and inactivation. Post-translationally, acetylated by KAT8 at Lys-235, promoting interaction with PSPC1, thereby facilitating recognition of N(6)-methyladenosine (m6A) mRNA by ALKBH5. Deacetylated at Lys-235 by HDAC7. In terms of processing, sumoylated at Lys-86 and Lys-321 by PIAS4 following phosphorylation at Ser-87 and Ser-325 in response to reactive oxygen species (ROS), inhibiting the RNA demethylase activity. Desumoylated by SENP1; relieving RNA demethylase inhibition, leading to N(6)-methyladenosine-containing mRNAs demethylation. Ubiquitinated at Lys-57 via 'Lys-48'-linked polyubiquitin chain, leading to its degradation by the proteasome. Deubiquitinated at Lys-57 by USP9X, promoting its stabilizazion.

The protein resides in the nucleus speckle. It carries out the reaction an N(6)-methyladenosine in mRNA + 2-oxoglutarate + O2 = an adenosine in mRNA + formaldehyde + succinate + CO2. Its activity is regulated as follows. RNA demethylase activity is inhibited following sumoylation. Inhibition is relieved following desumoylation. Dioxygenase that specifically demethylates N(6)-methyladenosine (m6A) RNA, the most prevalent internal modification of messenger RNA (mRNA) in higher eukaryotes. Demethylates RNA by oxidative demethylation, which requires molecular oxygen, alpha-ketoglutarate and iron. Demethylation of m6A mRNA affects mRNA processing, translation and export. Can also demethylate N(6)-methyladenosine in single-stranded DNA (in vitro). Required for the late meiotic and haploid phases of spermatogenesis by mediating m6A demethylation in spermatocytes and round spermatids: m6A demethylation of target transcripts is required for correct splicing and the production of longer 3'-UTR mRNAs in male germ cells. Involved in paraspeckle assembly, a nuclear membraneless organelle, by undergoing liquid-liquid phase separation. Paraspeckle assembly is coupled with m6A demethylation of RNAs, such as NEAT1 non-coding RNA. Also acts as a negative regulator of T-cell development: inhibits gamma-delta T-cell proliferation via demethylation of JAG1 and NOTCH2 transcripts. Inhibits regulatory T-cell (Treg) recruitment by mediating demethylation and destabilization of CCL28 mRNAs. The protein is RNA demethylase ALKBH5 (ALKBH5) of Bos taurus (Bovine).